The primary structure comprises 365 residues: Methylthioribose-1-phosphate isomerase (365 aa).

D249 acts as the Proton donor in catalysis.

The protein belongs to the eIF-2B alpha/beta/delta subunits family. MtnA subfamily.

The protein resides in the cytoplasm. It localises to the nucleus. It catalyses the reaction 5-(methylsulfanyl)-alpha-D-ribose 1-phosphate = 5-(methylsulfanyl)-D-ribulose 1-phosphate. The protein operates within amino-acid biosynthesis; L-methionine biosynthesis via salvage pathway; L-methionine from S-methyl-5-thio-alpha-D-ribose 1-phosphate: step 1/6. Catalyzes the interconversion of methylthioribose-1-phosphate (MTR-1-P) into methylthioribulose-1-phosphate (MTRu-1-P). The polypeptide is Methylthioribose-1-phosphate isomerase (Ostreococcus lucimarinus (strain CCE9901)).